The primary structure comprises 76 residues: Candidate secreted effector protein MPL124497 (76 aa).

Positions 1–21 (MKLIIFAAISVAFMSFDQVLG) are cleaved as a signal peptide.

This sequence belongs to the CPGH1 family.

The protein localises to the secreted. Its subcellular location is the host cell. It is found in the host cytoplasm. It localises to the host nucleus. Functionally, rust effector delivered into infected tissues to modulate host functions and contribute to pathogen virulence. Enhances leaf colonization by the bacteria Pseudomonas syringae and the oomycete Hyaloperonospora arabidopsidis pathogens in an Arabidopsis thaliana infection model. This chain is Candidate secreted effector protein MPL124497, found in Melampsora larici-populina (strain 98AG31 / pathotype 3-4-7) (Poplar leaf rust fungus).